The chain runs to 295 residues: Acetylglutamate kinase (295 aa).

Substrate contacts are provided by residues 66 to 67 (GG), arginine 88, and asparagine 193.

This sequence belongs to the acetylglutamate kinase family. ArgB subfamily.

The protein resides in the cytoplasm. The enzyme catalyses N-acetyl-L-glutamate + ATP = N-acetyl-L-glutamyl 5-phosphate + ADP. The protein operates within amino-acid biosynthesis; L-arginine biosynthesis; N(2)-acetyl-L-ornithine from L-glutamate: step 2/4. Its function is as follows. Catalyzes the ATP-dependent phosphorylation of N-acetyl-L-glutamate. The sequence is that of Acetylglutamate kinase from Bradyrhizobium diazoefficiens (strain JCM 10833 / BCRC 13528 / IAM 13628 / NBRC 14792 / USDA 110).